An 880-amino-acid polypeptide reads, in one-letter code: Translation initiation factor IF-2 (880 aa).

Residues 143 to 228 (EAEAKAKAKA…EAERNGDHHI (86 aa)) are compositionally biased toward basic and acidic residues. Residues 143–289 (EAEAKAKAKA…APESMAHGFN (147 aa)) form a disordered region. The segment covering 249–262 (GRRARNKSNAKKRG) has biased composition (basic residues). Residues 380–549 (SRAPVVTIMG…LLQAEVLELK (170 aa)) form the tr-type G domain. The interval 389 to 396 (GHVDHGKT) is G1. 389-396 (GHVDHGKT) lines the GTP pocket. The tract at residues 414 to 418 (GITQH) is G2. The G3 stretch occupies residues 435 to 438 (DTPG). GTP is bound by residues 435–439 (DTPGH) and 489–492 (NKMD). The G4 stretch occupies residues 489-492 (NKMD). Residues 525 to 527 (SAK) form a G5 region.

The protein belongs to the TRAFAC class translation factor GTPase superfamily. Classic translation factor GTPase family. IF-2 subfamily.

The protein resides in the cytoplasm. In terms of biological role, one of the essential components for the initiation of protein synthesis. Protects formylmethionyl-tRNA from spontaneous hydrolysis and promotes its binding to the 30S ribosomal subunits. Also involved in the hydrolysis of GTP during the formation of the 70S ribosomal complex. The polypeptide is Translation initiation factor IF-2 (Shewanella putrefaciens (strain CN-32 / ATCC BAA-453)).